Reading from the N-terminus, the 219-residue chain is 7-cyano-7-deazaguanine synthase (219 aa).

Residue 10-20 coordinates ATP; it reads FSGGQDSTTCL. Residues Cys186, Cys195, Cys198, and Cys201 each coordinate Zn(2+).

Belongs to the QueC family. As to quaternary structure, homodimer. The cofactor is Zn(2+).

The catalysed reaction is 7-carboxy-7-deazaguanine + NH4(+) + ATP = 7-cyano-7-deazaguanine + ADP + phosphate + H2O + H(+). The protein operates within purine metabolism; 7-cyano-7-deazaguanine biosynthesis. In terms of biological role, catalyzes the ATP-dependent conversion of 7-carboxy-7-deazaguanine (CDG) to 7-cyano-7-deazaguanine (preQ(0)). This chain is 7-cyano-7-deazaguanine synthase, found in Bacillus licheniformis (strain ATCC 14580 / DSM 13 / JCM 2505 / CCUG 7422 / NBRC 12200 / NCIMB 9375 / NCTC 10341 / NRRL NRS-1264 / Gibson 46).